Consider the following 157-residue polypeptide: Acetyltransferase PseH (157 aa).

Residues 5–152 (KNFAELNSQE…YYVCLKQSHC (148 aa)) enclose the N-acetyltransferase domain.

Functionally, catalyzes the third step in the biosynthesis of pseudaminic acid, a sialic-acid-like sugar that is used to modify flagellin. Mediates N-4 acetylation of UDP-4-amino-4,6-dideoxy-beta-L-AltNAc to form UDP-2,4-diacetamido-2,4,6-trideoxy-beta-L-altropyranose. The protein is Acetyltransferase PseH (pseH) of Campylobacter jejuni subsp. jejuni serotype O:2 (strain ATCC 700819 / NCTC 11168).